Reading from the N-terminus, the 228-residue chain is Upstream activation factor subunit UAF30 (228 aa).

The region spanning 1-56 (MAELNDYSTMIDILLSDMDLETVTTKKVRMALKEVYAIDVESQGKAINKLIRKHLD) is the DEK-C domain. Positions 89–111 (SKRSSGEEKNDSETKGTHVEKKK) are enriched in basic and acidic residues. A disordered region spans residues 89 to 118 (SKRSSGEEKNDSETKGTHVEKKKGTVSKSP). The SWIB/MDM2 domain occupies 119–195 (ISTRKVTLSK…HKILASHMTE (77 aa)). The tract at residues 209–228 (VRRKEKPIVSDSEQSDTKGI) is disordered. Residues Ser218, Ser220, and Ser223 each carry the phosphoserine modification.

Component of the UAF (upstream activation factor) complex which consists of UAF30, RRN5, RRN9, RRN10, and histones H3 and H4.

Its subcellular location is the nucleus. It is found in the nucleolus. Functionally, nonessential component of the UAF (upstream activation factor) complex which interacts with the upstream element of the RNA polymerase I promoter and forms a stable preinitiation complex. Together with SPT15/TBP UAF seems to stimulate basal transcription to a fully activated level. UAF30 seems to play a role in silencing transcription by RNA polymerase II. The sequence is that of Upstream activation factor subunit UAF30 (UAF30) from Saccharomyces cerevisiae (strain ATCC 204508 / S288c) (Baker's yeast).